A 206-amino-acid chain; its full sequence is Nucleoside triphosphate pyrophosphatase (206 aa).

Aspartate 71 functions as the Proton acceptor in the catalytic mechanism.

The protein belongs to the Maf family. The cofactor is a divalent metal cation.

The protein resides in the cytoplasm. The catalysed reaction is a ribonucleoside 5'-triphosphate + H2O = a ribonucleoside 5'-phosphate + diphosphate + H(+). It catalyses the reaction a 2'-deoxyribonucleoside 5'-triphosphate + H2O = a 2'-deoxyribonucleoside 5'-phosphate + diphosphate + H(+). In terms of biological role, nucleoside triphosphate pyrophosphatase. May have a dual role in cell division arrest and in preventing the incorporation of modified nucleotides into cellular nucleic acids. The chain is Nucleoside triphosphate pyrophosphatase from Rippkaea orientalis (strain PCC 8801 / RF-1) (Cyanothece sp. (strain PCC 8801)).